A 292-amino-acid chain; its full sequence is MSMPATSTKTTKLATSLIDEYALLGWRAMLTEVNLSPKPGLVDRINCGAHKDMALEDFHRSALAIQGWLPRFIEFGACSAEMAPEEVLHGLRPIGMACEGDMFRATAGVNTHKGSIFSLGLLCAAIGRLLQLNQSVTPITICATAASFCRGLTDRELRTNNSQLTAGQRLYQQLGLTGARGEAEAGYPLVINHALPHYLTLLDQGLDPELALLDTLLLLMATNGDTNVASRGGEGGLRWLQREAQTLLNNGGIRTPADLDYLRQFDRECIERNISPGGSADLLILTWFLAQI.

This sequence belongs to the CitG/MdcB family.

It catalyses the reaction 3'-dephospho-CoA + ATP = 2'-(5''-triphospho-alpha-D-ribosyl)-3'-dephospho-CoA + adenine. In terms of biological role, catalyzes the formation of 2-(5''-triphosphoribosyl)-3'-dephosphocoenzyme-A, the precursor of the prosthetic group of the holo-acyl carrier protein (gamma chain) of citrate lyase, from ATP and dephospho-CoA. The sequence is that of 2-(5''-triphosphoribosyl)-3'-dephosphocoenzyme-A synthase from Escherichia coli (strain UTI89 / UPEC).